The sequence spans 98 residues: C-X-C motif chemokine 10 (98 aa).

The signal sequence occupies residues 1 to 21 (MNPSAAVIFCLILLGLSGTQG). Citrulline is present on R26. 2 cysteine pairs are disulfide-bonded: C30-C57 and C32-C74.

It belongs to the intercrine alpha (chemokine CxC) family. In terms of assembly, monomer, dimer, and tetramer. Interacts with CXCR3 (via N-terminus). Expressed in the spleen, thymus, lymph nodes and liver. Expressed in astrocytes, microglia, and neurons.

The protein resides in the secreted. Its function is as follows. Pro-inflammatory cytokine that is involved in a wide variety of processes such as chemotaxis, differentiation, and activation of peripheral immune cells, regulation of cell growth, apoptosis and modulation of angiostatic effects. Plays thereby an important role during viral infections by stimulating the activation and migration of immune cells to the infected sites. Mechanistically, binding of CXCL10 to the CXCR3 receptor activates G protein-mediated signaling and results in downstream activation of phospholipase C-dependent pathway, an increase in intracellular calcium production and actin reorganization. In turn, recruitment of activated Th1 lymphocytes occurs at sites of inflammation. Activation of the CXCL10/CXCR3 axis also plays an important role in neurons in response to brain injury for activating microglia, the resident macrophage population of the central nervous system, and directing them to the lesion site. This recruitment is an essential element for neuronal reorganization. This Mus musculus (Mouse) protein is C-X-C motif chemokine 10 (Cxcl10).